Reading from the N-terminus, the 148-residue chain is Universal stress protein YxiE (148 aa).

A signal peptide spans 1-18 (MFNKMLVAIDGSDMSAKA).

It belongs to the universal stress protein A family.

This chain is Universal stress protein YxiE (yxiE), found in Bacillus subtilis (strain 168).